The primary structure comprises 611 residues: Urease subunit alpha 2 (611 aa).

In terms of domain architecture, Urease spans glycine 154–phenylalanine 611. Ni(2+)-binding residues include histidine 159, histidine 161, and lysine 242. Lysine 242 carries the post-translational modification N6-carboxylysine. Histidine 244 contacts substrate. Histidine 271 and histidine 297 together coordinate Ni(2+). Histidine 345 serves as the catalytic Proton donor. A Ni(2+)-binding site is contributed by aspartate 385. The segment at glycine 411–aspartate 434 is disordered. The span at serine 418–aspartate 434 shows a compositional bias: polar residues.

Belongs to the metallo-dependent hydrolases superfamily. Urease alpha subunit family. In terms of assembly, heterotrimer of UreA (gamma), UreB (beta) and UreC (alpha) subunits. Three heterotrimers associate to form the active enzyme. Ni cation serves as cofactor. In terms of processing, carboxylation allows a single lysine to coordinate two nickel ions.

The protein localises to the cytoplasm. The enzyme catalyses urea + 2 H2O + H(+) = hydrogencarbonate + 2 NH4(+). It functions in the pathway nitrogen metabolism; urea degradation; CO(2) and NH(3) from urea (urease route): step 1/1. The polypeptide is Urease subunit alpha 2 (Psychrobacter cryohalolentis (strain ATCC BAA-1226 / DSM 17306 / VKM B-2378 / K5)).